The primary structure comprises 187 residues: Large ribosomal subunit protein uL22 (187 aa).

Composition is skewed to basic and acidic residues over residues 158–168 (TKATDESEQAK) and 178–187 (RQKEKMMRNE). The disordered stretch occupies residues 158–187 (TKATDESEQAKKKLSKKKLQRQKEKMMRNE).

This sequence belongs to the universal ribosomal protein uL22 family.

This Anopheles gambiae (African malaria mosquito) protein is Large ribosomal subunit protein uL22 (RpL17).